A 549-amino-acid chain; its full sequence is CTP synthase (549 aa).

Positions 1–267 (MTKFVFVTGG…AAQVLSLLNL (267 aa)) are amidoligase domain. Ser13 provides a ligand contact to CTP. Ser13 serves as a coordination point for UTP. ATP-binding positions include 14-19 (SIGKGI) and Asp71. Mg(2+)-binding residues include Asp71 and Glu141. Residues 148-150 (DIE), 188-193 (KTKPTQ), and Lys224 each bind CTP. Residues 188–193 (KTKPTQ) and Lys224 each bind UTP. The Glutamine amidotransferase type-1 domain maps to 292-534 (EIAIVGKYVR…VQAARTHSSD (243 aa)). Gly354 contributes to the L-glutamine binding site. Cys381 functions as the Nucleophile; for glutamine hydrolysis in the catalytic mechanism. Residues 382–385 (LGMQ), Glu405, and Arg462 contribute to the L-glutamine site. Catalysis depends on residues His507 and Glu509.

It belongs to the CTP synthase family. As to quaternary structure, homotetramer.

The catalysed reaction is UTP + L-glutamine + ATP + H2O = CTP + L-glutamate + ADP + phosphate + 2 H(+). The enzyme catalyses L-glutamine + H2O = L-glutamate + NH4(+). It catalyses the reaction UTP + NH4(+) + ATP = CTP + ADP + phosphate + 2 H(+). Its pathway is pyrimidine metabolism; CTP biosynthesis via de novo pathway; CTP from UDP: step 2/2. With respect to regulation, allosterically activated by GTP, when glutamine is the substrate; GTP has no effect on the reaction when ammonia is the substrate. The allosteric effector GTP functions by stabilizing the protein conformation that binds the tetrahedral intermediate(s) formed during glutamine hydrolysis. Inhibited by the product CTP, via allosteric rather than competitive inhibition. Its function is as follows. Catalyzes the ATP-dependent amination of UTP to CTP with either L-glutamine or ammonia as the source of nitrogen. Regulates intracellular CTP levels through interactions with the four ribonucleotide triphosphates. This is CTP synthase from Cyanothece sp. (strain PCC 7425 / ATCC 29141).